The sequence spans 491 residues: Glutamyl-tRNA(Gln) amidotransferase subunit A (491 aa).

Active-site charge relay system residues include Lys-79 and Ser-154. Ser-178 acts as the Acyl-ester intermediate in catalysis.

This sequence belongs to the amidase family. GatA subfamily. In terms of assembly, heterotrimer of A, B and C subunits.

The enzyme catalyses L-glutamyl-tRNA(Gln) + L-glutamine + ATP + H2O = L-glutaminyl-tRNA(Gln) + L-glutamate + ADP + phosphate + H(+). In terms of biological role, allows the formation of correctly charged Gln-tRNA(Gln) through the transamidation of misacylated Glu-tRNA(Gln) in organisms which lack glutaminyl-tRNA synthetase. The reaction takes place in the presence of glutamine and ATP through an activated gamma-phospho-Glu-tRNA(Gln). This chain is Glutamyl-tRNA(Gln) amidotransferase subunit A, found in Synechococcus sp. (strain CC9605).